The following is a 159-amino-acid chain: Large ribosomal subunit protein uL15 (159 aa).

The span at 1–18 (MKLNEIKDNEGSSKDRIR) shows a compositional bias: basic and acidic residues. Residues 1-39 (MKLNEIKDNEGSSKDRIRVGRGIGSGKGKTGGRGVKGQK) are disordered. Residues 21–35 (RGIGSGKGKTGGRGV) are compositionally biased toward gly residues.

This sequence belongs to the universal ribosomal protein uL15 family. Part of the 50S ribosomal subunit.

In terms of biological role, binds to the 23S rRNA. The chain is Large ribosomal subunit protein uL15 from Allorhizobium ampelinum (strain ATCC BAA-846 / DSM 112012 / S4) (Agrobacterium vitis (strain S4)).